The chain runs to 290 residues: Small ribosomal subunit biogenesis GTPase RsgA (290 aa).

Positions 62 to 213 (KNSLVRPPIV…IADTPGFSSL (152 aa)) constitute a CP-type G domain. Residues 111–114 (SKLD) and 156–164 (GQTGVGKST) each bind GTP. The Zn(2+) site is built by C237, C242, H244, and C250.

It belongs to the TRAFAC class YlqF/YawG GTPase family. RsgA subfamily. In terms of assembly, monomer. Associates with 30S ribosomal subunit, binds 16S rRNA. It depends on Zn(2+) as a cofactor.

The protein localises to the cytoplasm. In terms of biological role, one of several proteins that assist in the late maturation steps of the functional core of the 30S ribosomal subunit. Helps release RbfA from mature subunits. May play a role in the assembly of ribosomal proteins into the subunit. Circularly permuted GTPase that catalyzes slow GTP hydrolysis, GTPase activity is stimulated by the 30S ribosomal subunit. The chain is Small ribosomal subunit biogenesis GTPase RsgA from Streptococcus agalactiae serotype V (strain ATCC BAA-611 / 2603 V/R).